The primary structure comprises 342 residues: Uroporphyrinogen decarboxylase (342 aa).

Substrate-binding positions include 21-25 (RQAGR), Asp71, Tyr148, Ser203, and His316.

It belongs to the uroporphyrinogen decarboxylase family. In terms of assembly, homodimer.

It localises to the cytoplasm. The enzyme catalyses uroporphyrinogen III + 4 H(+) = coproporphyrinogen III + 4 CO2. It functions in the pathway porphyrin-containing compound metabolism; protoporphyrin-IX biosynthesis; coproporphyrinogen-III from 5-aminolevulinate: step 4/4. Functionally, catalyzes the decarboxylation of four acetate groups of uroporphyrinogen-III to yield coproporphyrinogen-III. The protein is Uroporphyrinogen decarboxylase of Campylobacter curvus (strain 525.92).